Reading from the N-terminus, the 363-residue chain is Trichocyst matrix protein T4-B (363 aa).

Residues 1 to 17 (MARSLTILAIVFAVATA) form the signal peptide. Residues 18-52 (RVTKSESPKEILAQVNKDSFGNSILSVLQLQLATG) constitute a propeptide that is removed on maturation. Residues 85-119 (VAFEKIIADLEQEIAYHQTQIVALSNLRDSTTEAL) are a coiled coil. The propeptide occupies 190-221 (RFEKVQAKLMESKHALFKPLINALTQLASKVD). Residues 244 to 352 (ASLLATEERQ…EVLTQKLSAA (109 aa)) are a coiled coil.

It belongs to the TMP family. In terms of processing, two components are produced by post-translational processing from the precursor peptide.

It is found in the trichocyst. Functionally, structural protein that crystallize inside the trichocyst matrix. This is Trichocyst matrix protein T4-B (T4B) from Paramecium tetraurelia.